The primary structure comprises 162 residues: Interleukin-15 (162 aa).

A signal peptide spans 1–29; that stretch reads MRISKPSLRSTSIQCYLCFLLNSHLITEA. Positions 30–48 are excised as a propeptide; sequence GIHVFVWGCISAGLPKTEA. 2 disulfides stabilise this stretch: Cys83/Cys133 and Cys90/Cys136. Asn119 and Asn127 each carry an N-linked (GlcNAc...) asparagine glycan.

This sequence belongs to the IL-15/IL-21 family.

It localises to the secreted. Its function is as follows. Cytokine that plays a major role in the development of inflammatory and protective immune responses to microbial invaders and parasites by modulating immune cells of both the innate and adaptive immune systems. Stimulates the proliferation of natural killer cells, T-cells and B-cells and promotes the secretion of several cytokines. In monocytes, induces the production of IL8 and monocyte chemotactic protein 1/CCL2, two chemokines that attract neutrophils and monocytes respectively to sites of infection. Unlike most cytokines, which are secreted in soluble form, IL15 is expressed in association with its high affinity IL15RA on the surface of IL15-producing cells and delivers signals to target cells that express IL2RB and IL2RG receptor subunits. Binding to its receptor triggers the phosphorylation of JAK1 and JAK3 and the recruitment and subsequent phosphorylation of signal transducer and activator of transcription-3/STAT3 and STAT5. In mast cells, induces the rapid tyrosine phosphorylation of STAT6 and thereby controls mast cell survival and release of cytokines such as IL4. The sequence is that of Interleukin-15 (IL15) from Cavia porcellus (Guinea pig).